A 306-amino-acid chain; its full sequence is Homeobox protein HMX3 (306 aa).

Residues 95–181 are disordered; that stretch reads HTPRTEVPDK…DKKPCRKKKT (87 aa). Composition is skewed to basic and acidic residues over residues 117 to 143 and 153 to 174; these read GERD…KSPE and EEGK…PDKK. The homeobox DNA-binding region spans 178-237; that stretch reads KKKTRTVFSRSQVFQLESTFDMKRYLSSSERAGLAASLHLTETQVKIWFQNRRNKWKRQL.

It belongs to the HMX homeobox family.

Its subcellular location is the nucleus. In terms of biological role, transcription factor involved in specification of neuronal cell types and which is required for inner ear and hypothalamus development. Binds to the 5'-CAAGTG-3' core sequence. May act as a stage-specific inhibitor of anf1 in the anterior neural plate during the development. The polypeptide is Homeobox protein HMX3 (hmx3) (Xenopus laevis (African clawed frog)).